The following is a 119-amino-acid chain: NADH-quinone oxidoreductase subunit A (119 aa).

Transmembrane regions (helical) follow at residues 7–27, 63–83, and 88–108; these read FPVL…VSIG, LVAI…PWGV, and IGWP…LGFA.

Belongs to the complex I subunit 3 family. NDH-1 is composed of 14 different subunits. Subunits NuoA, H, J, K, L, M, N constitute the membrane sector of the complex.

It is found in the cell inner membrane. It catalyses the reaction a quinone + NADH + 5 H(+)(in) = a quinol + NAD(+) + 4 H(+)(out). In terms of biological role, NDH-1 shuttles electrons from NADH, via FMN and iron-sulfur (Fe-S) centers, to quinones in the respiratory chain. The immediate electron acceptor for the enzyme in this species is believed to be ubiquinone. Couples the redox reaction to proton translocation (for every two electrons transferred, four hydrogen ions are translocated across the cytoplasmic membrane), and thus conserves the redox energy in a proton gradient. The chain is NADH-quinone oxidoreductase subunit A from Paraburkholderia phytofirmans (strain DSM 17436 / LMG 22146 / PsJN) (Burkholderia phytofirmans).